The primary structure comprises 449 residues: Phosphoglucosamine mutase (449 aa).

The Phosphoserine intermediate role is filled by Ser99. Mg(2+)-binding residues include Ser99, Asp239, Asp241, and Asp243. Ser99 carries the phosphoserine modification.

The protein belongs to the phosphohexose mutase family. It depends on Mg(2+) as a cofactor. Activated by phosphorylation.

The catalysed reaction is alpha-D-glucosamine 1-phosphate = D-glucosamine 6-phosphate. In terms of biological role, catalyzes the conversion of glucosamine-6-phosphate to glucosamine-1-phosphate. The protein is Phosphoglucosamine mutase of Finegoldia magna (strain ATCC 29328 / DSM 20472 / WAL 2508) (Peptostreptococcus magnus).